Reading from the N-terminus, the 469-residue chain is 3-isopropylmalate dehydratase large subunit (469 aa).

[4Fe-4S] cluster-binding residues include cysteine 349, cysteine 410, and cysteine 413.

It belongs to the aconitase/IPM isomerase family. LeuC type 1 subfamily. Heterodimer of LeuC and LeuD. The cofactor is [4Fe-4S] cluster.

It carries out the reaction (2R,3S)-3-isopropylmalate = (2S)-2-isopropylmalate. The protein operates within amino-acid biosynthesis; L-leucine biosynthesis; L-leucine from 3-methyl-2-oxobutanoate: step 2/4. Functionally, catalyzes the isomerization between 2-isopropylmalate and 3-isopropylmalate, via the formation of 2-isopropylmaleate. This is 3-isopropylmalate dehydratase large subunit from Neisseria meningitidis serogroup B (strain ATCC BAA-335 / MC58).